A 490-amino-acid polypeptide reads, in one-letter code: Allantoin permease (490 aa).

12 consecutive transmembrane segments (helical) span residues 36-56 (IWMGCIHNIPTYATVGGLIAI), 60-80 (PWQVLAIIITASLILFGALAL), 116-136 (AIMWLGIQTFAGSTALNILLL), 151-171 (ILGIHLSGLLSFVFFWAIHLL), 190-210 (LVYLVFGGMVWWAVDIAGGLG), 225-245 (TFWPFAAGVTGIIGIWATLIL), 265-285 (FYGLPGTFALFAFASITVTSG), 308-328 (YVIVLSVITLCIATISVNVAA), 350-370 (GSFITALLALFTVPWKLMESA), 373-393 (VYAFLGLIGGMLGPVAGVMMA), 425-445 (AFAATMLGALISLIGMYVPVL), and 448-468 (LYDISWFVGVLISFLFYIVLM).

Belongs to the purine-cytosine permease (2.A.39) family.

The protein localises to the cell membrane. It carries out the reaction (S)-allantoin(in) + H(+)(in) = (S)-allantoin(out) + H(+)(out). Functionally, uptake of allantoin into the cell. Allantoin uptake is not dependent on sodium, and PucI is likely to be a proton-coupled symporter. Shows highest recognition for binding of allantoin, good recognition for binding of hydantoin, L-5-benzylhydantoin and 5-hydroxyhydantoin, and to a lesser extent for a range of nucleobases and nucleosides. The protein is Allantoin permease of Bacillus subtilis (strain 168).